The chain runs to 277 residues: Large ribosomal subunit protein uL2 (277 aa).

Positions 222 to 277 are disordered; sequence GVAMNPVDHPHGGGEGRTSGGRHPVTPWGKPTKGKKTRSNKATDKFIMRSRHQRKK.

This sequence belongs to the universal ribosomal protein uL2 family. Part of the 50S ribosomal subunit. Forms a bridge to the 30S subunit in the 70S ribosome.

One of the primary rRNA binding proteins. Required for association of the 30S and 50S subunits to form the 70S ribosome, for tRNA binding and peptide bond formation. It has been suggested to have peptidyltransferase activity; this is somewhat controversial. Makes several contacts with the 16S rRNA in the 70S ribosome. In Brucella melitensis biotype 1 (strain ATCC 23456 / CCUG 17765 / NCTC 10094 / 16M), this protein is Large ribosomal subunit protein uL2.